Reading from the N-terminus, the 109-residue chain is Large ribosomal subunit protein uL23 (109 aa).

This sequence belongs to the universal ribosomal protein uL23 family. In terms of assembly, part of the 50S ribosomal subunit. Contacts protein L29, and trigger factor when it is bound to the ribosome.

Its function is as follows. One of the early assembly proteins it binds 23S rRNA. One of the proteins that surrounds the polypeptide exit tunnel on the outside of the ribosome. Forms the main docking site for trigger factor binding to the ribosome. The chain is Large ribosomal subunit protein uL23 from Chlorobium phaeobacteroides (strain BS1).